Consider the following 148-residue polypeptide: Large ribosomal subunit protein bL9 (148 aa).

The protein belongs to the bacterial ribosomal protein bL9 family.

Binds to the 23S rRNA. The sequence is that of Large ribosomal subunit protein bL9 from Solibacter usitatus (strain Ellin6076).